The primary structure comprises 240 residues: Ribonuclease PH (240 aa).

Residues arginine 87 and 125-127 (GTR) contribute to the phosphate site.

It belongs to the RNase PH family. As to quaternary structure, homohexameric ring arranged as a trimer of dimers.

The catalysed reaction is tRNA(n+1) + phosphate = tRNA(n) + a ribonucleoside 5'-diphosphate. Phosphorolytic 3'-5' exoribonuclease that plays an important role in tRNA 3'-end maturation. Removes nucleotide residues following the 3'-CCA terminus of tRNAs; can also add nucleotides to the ends of RNA molecules by using nucleoside diphosphates as substrates, but this may not be physiologically important. Probably plays a role in initiation of 16S rRNA degradation (leading to ribosome degradation) during starvation. The polypeptide is Ribonuclease PH (Pseudomonas putida (strain GB-1)).